The primary structure comprises 274 residues: Large ribosomal subunit protein uL2 (274 aa).

Disordered stretches follow at residues 28-54 (KPFAPLLEKNSKTGGRNNNGRITTRHI) and 221-274 (RGTA…RSKK). Over residues 39–49 (KTGGRNNNGRI) the composition is skewed to polar residues.

Belongs to the universal ribosomal protein uL2 family. Part of the 50S ribosomal subunit. Forms a bridge to the 30S subunit in the 70S ribosome.

Its function is as follows. One of the primary rRNA binding proteins. Required for association of the 30S and 50S subunits to form the 70S ribosome, for tRNA binding and peptide bond formation. It has been suggested to have peptidyltransferase activity; this is somewhat controversial. Makes several contacts with the 16S rRNA in the 70S ribosome. This is Large ribosomal subunit protein uL2 from Edwardsiella ictaluri (strain 93-146).